The following is a 376-amino-acid chain: Lipid-A-disaccharide synthase (376 aa).

Belongs to the LpxB family.

The enzyme catalyses a lipid X + a UDP-2-N,3-O-bis[(3R)-3-hydroxyacyl]-alpha-D-glucosamine = a lipid A disaccharide + UDP + H(+). It participates in bacterial outer membrane biogenesis; LPS lipid A biosynthesis. Functionally, condensation of UDP-2,3-diacylglucosamine and 2,3-diacylglucosamine-1-phosphate to form lipid A disaccharide, a precursor of lipid A, a phosphorylated glycolipid that anchors the lipopolysaccharide to the outer membrane of the cell. In Coxiella burnetii (strain CbuK_Q154) (Coxiella burnetii (strain Q154)), this protein is Lipid-A-disaccharide synthase.